The primary structure comprises 160 residues: Putative pre-16S rRNA nuclease (160 aa).

The protein belongs to the YqgF nuclease family.

Its subcellular location is the cytoplasm. In terms of biological role, could be a nuclease involved in processing of the 5'-end of pre-16S rRNA. In Jannaschia sp. (strain CCS1), this protein is Putative pre-16S rRNA nuclease.